We begin with the raw amino-acid sequence, 340 residues long: Methionine import ATP-binding protein MetN 2 (340 aa).

Positions isoleucine 2 to valine 241 constitute an ABC transporter domain. Residue glycine 38–serine 45 coordinates ATP.

Belongs to the ABC transporter superfamily. Methionine importer (TC 3.A.1.24) family. As to quaternary structure, the complex is composed of two ATP-binding proteins (MetN), two transmembrane proteins (MetI) and a solute-binding protein (MetQ).

The protein resides in the cell membrane. The catalysed reaction is L-methionine(out) + ATP + H2O = L-methionine(in) + ADP + phosphate + H(+). It catalyses the reaction D-methionine(out) + ATP + H2O = D-methionine(in) + ADP + phosphate + H(+). Its function is as follows. Part of the ABC transporter complex MetNIQ involved in methionine import. Responsible for energy coupling to the transport system. The protein is Methionine import ATP-binding protein MetN 2 of Listeria monocytogenes serovar 1/2a (strain ATCC BAA-679 / EGD-e).